The sequence spans 167 residues: Small ribosomal subunit protein uS5 (167 aa).

Residues Leu-12 to Val-75 form the S5 DRBM domain.

This sequence belongs to the universal ribosomal protein uS5 family. Part of the 30S ribosomal subunit. Contacts proteins S4 and S8.

With S4 and S12 plays an important role in translational accuracy. Functionally, located at the back of the 30S subunit body where it stabilizes the conformation of the head with respect to the body. This chain is Small ribosomal subunit protein uS5, found in Halorhodospira halophila (strain DSM 244 / SL1) (Ectothiorhodospira halophila (strain DSM 244 / SL1)).